We begin with the raw amino-acid sequence, 274 residues long: HTH-type transcriptional regulator GadX (274 aa).

One can recognise an HTH araC/xylS-type domain in the interval Thr145 to Arg242. 2 consecutive DNA-binding regions (H-T-H motif) follow at residues Ala162–Gly183 and Ile209–Tyr232.

As to quaternary structure, homodimer.

Its function is as follows. Positively regulates the expression of about fifteen genes involved in acid resistance such as gadA, gadB and gadC. Depending on the conditions (growth phase and medium), can repress gadW. Negatively regulates perA expression in acidic conditions and positively regulates it in alkaline conditions. This is HTH-type transcriptional regulator GadX (gadX) from Escherichia coli O127:H6 (strain E2348/69 / EPEC).